Reading from the N-terminus, the 465-residue chain is Dihydrolipoyl dehydrogenase (465 aa).

Residues 34-42, lysine 51, and glycine 114 each bind FAD; that span reads EKREAGGTC. Cysteines 42 and 47 form a disulfide. NAD(+) is bound by residues 180 to 184, glutamate 203, valine 237, and 264 to 267; these read GGGVI and SIGR. The FAD site is built by aspartate 307 and alanine 315. Histidine 439 (proton acceptor) is an active-site residue.

Belongs to the class-I pyridine nucleotide-disulfide oxidoreductase family. Requires FAD as cofactor.

The protein localises to the cytoplasm. It carries out the reaction N(6)-[(R)-dihydrolipoyl]-L-lysyl-[protein] + NAD(+) = N(6)-[(R)-lipoyl]-L-lysyl-[protein] + NADH + H(+). Its function is as follows. The branched-chain alpha-keto dehydrogenase complex catalyzes the overall conversion of alpha-keto acids to acyl-CoA and CO(2). It contains multiple copies of 3 enzymatic components: branched-chain alpha-keto acid decarboxylase (E1), lipoamide acyltransferase (E2) and lipoamide dehydrogenase (E3). This chain is Dihydrolipoyl dehydrogenase (lpdA), found in Chlamydia trachomatis serovar D (strain ATCC VR-885 / DSM 19411 / UW-3/Cx).